The chain runs to 256 residues: Chitinase 11 (256 aa).

Positions 1–22 (MRRLLPLAGATLLIAAAGGASG) are cleaved as a signal peptide. 2 disulfides stabilise this stretch: Cys48/Cys109 and Cys214/Cys247. Glu91 serves as the catalytic Proton donor.

It belongs to the glycosyl hydrolase 19 family. Chitinase class II subfamily. In terms of tissue distribution, expressed in leaves and at lower levels in roots, sheaths and meristems.

It carries out the reaction Random endo-hydrolysis of N-acetyl-beta-D-glucosaminide (1-&gt;4)-beta-linkages in chitin and chitodextrins.. The polypeptide is Chitinase 11 (Cht11) (Oryza sativa subsp. japonica (Rice)).